Reading from the N-terminus, the 297-residue chain is Aspartate carbamoyltransferase catalytic subunit (297 aa).

Carbamoyl phosphate is bound by residues R48 and T49. K76 contributes to the L-aspartate binding site. Residues R98, H129, and Q132 each contribute to the carbamoyl phosphate site. 2 residues coordinate L-aspartate: R162 and R214. Carbamoyl phosphate contacts are provided by A257 and P258.

This sequence belongs to the aspartate/ornithine carbamoyltransferase superfamily. ATCase family. As to quaternary structure, heterododecamer (2C3:3R2) of six catalytic PyrB chains organized as two trimers (C3), and six regulatory PyrI chains organized as three dimers (R2).

It catalyses the reaction carbamoyl phosphate + L-aspartate = N-carbamoyl-L-aspartate + phosphate + H(+). Its pathway is pyrimidine metabolism; UMP biosynthesis via de novo pathway; (S)-dihydroorotate from bicarbonate: step 2/3. Functionally, catalyzes the condensation of carbamoyl phosphate and aspartate to form carbamoyl aspartate and inorganic phosphate, the committed step in the de novo pyrimidine nucleotide biosynthesis pathway. The chain is Aspartate carbamoyltransferase catalytic subunit from Leuconostoc mesenteroides subsp. mesenteroides (strain ATCC 8293 / DSM 20343 / BCRC 11652 / CCM 1803 / JCM 6124 / NCDO 523 / NBRC 100496 / NCIMB 8023 / NCTC 12954 / NRRL B-1118 / 37Y).